The chain runs to 598 residues: Chaperone protein DnaK (598 aa).

Threonine 175 is subject to Phosphothreonine; by autocatalysis. Residues 571 to 591 (AKSAAASSNKDDSLNNNSSSN) show a composition bias toward low complexity. The segment at 571–598 (AKSAAASSNKDDSLNNNSSSNNDEETFE) is disordered.

It belongs to the heat shock protein 70 family.

In terms of biological role, acts as a chaperone. This Mycoplasmopsis agalactiae (strain NCTC 10123 / CIP 59.7 / PG2) (Mycoplasma agalactiae) protein is Chaperone protein DnaK.